A 356-amino-acid polypeptide reads, in one-letter code: Serendipity locus protein beta (356 aa).

The C2H2-type 1; degenerate zinc-finger motif lies at 171–193; the sequence is IPCHICGEMFSSQEVLERHIKAD. 5 consecutive C2H2-type zinc fingers follow at residues 201-223, 229-251, 257-279, 286-308, and 315-337; these read ATCN…MNLH, LECR…MEVH, YQCD…LMRH, LICE…LRTH, and YPCP…KRVH.

In terms of assembly, binds chromatin; requires N-terminal regions to form protein-protein contacts, in addition to DNA specific recognition by the zinc fingers.

The protein localises to the nucleus. Binds to the consensus DNA sequence 5'-YCAGAGATGCGCA-3'. The sequence is that of Serendipity locus protein beta (Sry-beta) from Drosophila melanogaster (Fruit fly).